The primary structure comprises 458 residues: tRNA(Ile)-lysidine synthase (458 aa).

36-41 is a binding site for ATP; it reads SGGADS.

It belongs to the tRNA(Ile)-lysidine synthase family.

Its subcellular location is the cytoplasm. The catalysed reaction is cytidine(34) in tRNA(Ile2) + L-lysine + ATP = lysidine(34) in tRNA(Ile2) + AMP + diphosphate + H(+). Its function is as follows. Ligates lysine onto the cytidine present at position 34 of the AUA codon-specific tRNA(Ile) that contains the anticodon CAU, in an ATP-dependent manner. Cytidine is converted to lysidine, thus changing the amino acid specificity of the tRNA from methionine to isoleucine. This is tRNA(Ile)-lysidine synthase from Protochlamydia amoebophila (strain UWE25).